A 402-amino-acid polypeptide reads, in one-letter code: TBC1 domain family member 20 (402 aa).

Positions 1–27 are disordered; sequence MALRPSKGDGSAGRWDRGAGKADFNAK. Basic and acidic residues predominate over residues 14 to 26; the sequence is RWDRGAGKADFNA. The region spanning 59-245 is the Rab-GAP TBC domain; it reads LLTDEIRCQV…RLYDFFLACH (187 aa). The next 2 helical transmembrane spans lie at 237–257 and 366–386; these read LYDF…AVIV and FVKL…LAVV.

Its subcellular location is the membrane. Its function is as follows. GTPase-activating protein specific for Rab1 and Rab2 small GTPase families for which it can accelerate the intrinsic GTP hydrolysis rate by more than five orders of magnitude. Also shows GAP activity for RAB18 GTPase. Promotes RAB18 dissociation from the endoplasmic reticulum (ER) membrane into the cytosol, probably through stimulating RAB18 GTP-hydrolysis. Involved in maintaining endoplasmic reticulum structure. This Mus musculus (Mouse) protein is TBC1 domain family member 20.